A 137-amino-acid chain; its full sequence is Phosphomevalonate dehydratase small subunit (137 aa).

The Proton acceptor role is filled by serine 62.

It belongs to the AcnX type II small subunit family. Heterodimer composed of a large subunit (PMDh-L) and a small subunit (PMDh-S).

The enzyme catalyses (R)-5-phosphomevalonate = (2E)-3-methyl-5-phosphooxypent-2-enoate + H2O. The protein operates within isoprenoid biosynthesis; isopentenyl diphosphate biosynthesis via mevalonate pathway. In terms of biological role, component of a hydro-lyase that catalyzes the dehydration of mevalonate 5-phosphate (MVA5P) to form trans-anhydromevalonate 5-phosphate (tAHMP). Involved in the archaeal mevalonate (MVA) pathway, which provides fundamental precursors for isoprenoid biosynthesis, such as isopentenyl diphosphate (IPP) and dimethylallyl diphosphate (DMAPP). In Methanothrix thermoacetophila (strain DSM 6194 / JCM 14653 / NBRC 101360 / PT) (Methanosaeta thermophila), this protein is Phosphomevalonate dehydratase small subunit.